The chain runs to 753 residues: Oligopeptide transporter 5 (753 aa).

A run of 15 helical transmembrane segments spans residues 56–76 (TWFL…FFGY), 80–100 (PLTV…KLMA), 132–152 (ITIF…LTIV), 163–183 (AAAM…AGMF), 224–244 (FFLI…YLFP), 296–316 (FFAI…ILPI), 368–388 (YLSI…TATI), 432–452 (WWFV…CEGF), 461–481 (WGLL…GVIL), 506–528 (PLAN…YFVG), 544–564 (FIVQ…TTWW), 583–603 (PWTC…GIIG), 615–635 (PGMN…WFFA), 662–682 (AKAV…YYIF), and 695–715 (ILSA…YFAL).

The protein belongs to the oligopeptide OPT transporter (TC 2.A.67.1) family. As to expression, expressed predominantly in flowers, and at a very low level in leaves and roots.

The protein localises to the membrane. Its function is as follows. Involved in the translocation of tetra- and pentapeptides across the cellular membrane in an energy-dependent manner. The sequence is that of Oligopeptide transporter 5 (OPT5) from Arabidopsis thaliana (Mouse-ear cress).